An 89-amino-acid chain; its full sequence is Small ribosomal subunit protein uS15 (89 aa).

Belongs to the universal ribosomal protein uS15 family. As to quaternary structure, part of the 30S ribosomal subunit. Forms a bridge to the 50S subunit in the 70S ribosome, contacting the 23S rRNA.

In terms of biological role, one of the primary rRNA binding proteins, it binds directly to 16S rRNA where it helps nucleate assembly of the platform of the 30S subunit by binding and bridging several RNA helices of the 16S rRNA. Functionally, forms an intersubunit bridge (bridge B4) with the 23S rRNA of the 50S subunit in the ribosome. This Pseudomonas fluorescens (strain Pf0-1) protein is Small ribosomal subunit protein uS15.